A 435-amino-acid polypeptide reads, in one-letter code: Probable protein arginine N-methyltransferase 6 (435 aa).

The tract at residues Met-1–Gly-48 is disordered. The segment covering His-12 to Gln-25 has biased composition (basic and acidic residues). Residues Asp-80–His-418 form the SAM-dependent MTase PRMT-type domain. Positions 93, 102, 126, 148, and 177 each coordinate S-adenosyl-L-methionine. Catalysis depends on residues Glu-191 and Glu-200. The segment at Pro-333–Pro-377 is disordered. Residues Thr-337–Glu-354 are compositionally biased toward low complexity.

Belongs to the class I-like SAM-binding methyltransferase superfamily. Protein arginine N-methyltransferase family. PRMT6 subfamily.

Functionally, arginine methyltransferase that can both catalyze the formation of omega-N monomethylarginine (MMA) and asymmetrical dimethylarginine (aDMA). This chain is Probable protein arginine N-methyltransferase 6 (PRMT6), found in Arabidopsis thaliana (Mouse-ear cress).